The chain runs to 405 residues: Formate-dependent phosphoribosylglycinamide formyltransferase (405 aa).

Residues 27–28 (EL) and Glu-87 each bind N(1)-(5-phospho-beta-D-ribosyl)glycinamide. ATP is bound by residues Arg-120, Lys-162, 167 to 172 (SSGKGQ), 202 to 205 (EGFI), and Glu-210. Positions 125–320 (RLAAETLGLP…EFELHARALL (196 aa)) constitute an ATP-grasp domain. Mg(2+)-binding residues include Glu-279 and Glu-291. N(1)-(5-phospho-beta-D-ribosyl)glycinamide-binding positions include Asp-298, Lys-367, and 374–375 (RR).

This sequence belongs to the PurK/PurT family. In terms of assembly, homodimer.

The enzyme catalyses N(1)-(5-phospho-beta-D-ribosyl)glycinamide + formate + ATP = N(2)-formyl-N(1)-(5-phospho-beta-D-ribosyl)glycinamide + ADP + phosphate + H(+). It participates in purine metabolism; IMP biosynthesis via de novo pathway; N(2)-formyl-N(1)-(5-phospho-D-ribosyl)glycinamide from N(1)-(5-phospho-D-ribosyl)glycinamide (formate route): step 1/1. In terms of biological role, involved in the de novo purine biosynthesis. Catalyzes the transfer of formate to 5-phospho-ribosyl-glycinamide (GAR), producing 5-phospho-ribosyl-N-formylglycinamide (FGAR). Formate is provided by PurU via hydrolysis of 10-formyl-tetrahydrofolate. The protein is Formate-dependent phosphoribosylglycinamide formyltransferase of Bordetella avium (strain 197N).